The chain runs to 1238 residues: Multifunctional 2-oxoglutarate metabolism enzyme (1238 aa).

Residues 1-41 (MANISSPFGQNEWLVEEMYRKFRDDPSSVDPSWHEFLVDYN) are 2-oxoglutarate dehydrogenase E1, N-terminal part. The linker stretch occupies residues 42 to 97 (PESTAEPVLTDPTSTDKQPSATPQAKPAAAADPVASRAKPATTPTVANGTAAGSAA). Positions 44–108 (STAEPVLTDP…PAKTTTTPPI (65 aa)) are disordered. Over residues 59–107 (QPSATPQAKPAAAADPVASRAKPATTPTVANGTAAGSAAAPAKTTTTPP) the composition is skewed to low complexity. A succinyltransferase E2 region spans residues 98–346 (APAKTTTTPP…LRTIHEMVLS (249 aa)). Catalysis depends on His325, which acts as the Proton acceptor; for succinyltransferase activity. The segment at 347–1238 (DSFWDEIFRE…QQEILDTAFG (892 aa)) is 2-oxoglutarate dehydrogenase E1, C-terminal part. A thiamine diphosphate-binding site is contributed by Arg551. 2 residues coordinate 2-oxoglutarate: His590 and Ser615. Positions 615, 617, 657, 658, 659, and 690 each coordinate thiamine diphosphate. Residue Asp657 participates in Mg(2+) binding. Positions 690 and 692 each coordinate Mg(2+). Residues 795-825 (DISLKEAEDALRDYQGQLERVFNEVRDLEKH) are a coiled coil. Residue His1032 participates in 2-oxoglutarate binding. Residues Thr1050, Arg1066, Lys1101, Ser1104, Gln1154, Arg1161, and Arg1162 each contribute to the acetyl-CoA site.

Belongs to the 2-oxoacid dehydrogenase family. Kgd subfamily. Homodimer. The 2-oxoglutarate dehydrogenase (ODH) complex contains multiple copies of three enzymatic components: 2-oxoglutarate dehydrogenase (E1), dihydrolipoamide succinyltransferase (E2) and lipoamide dehydrogenase (E3). The cofactor is Mg(2+). It depends on thiamine diphosphate as a cofactor.

It catalyses the reaction glyoxylate + 2-oxoglutarate + H(+) = 2-hydroxy-3-oxoadipate + CO2. It carries out the reaction 2-oxoglutarate + H(+) = succinate semialdehyde + CO2. The enzyme catalyses N(6)-[(R)-lipoyl]-L-lysyl-[protein] + 2-oxoglutarate + H(+) = N(6)-[(R)-S(8)-succinyldihydrolipoyl]-L-lysyl-[protein] + CO2. The catalysed reaction is N(6)-[(R)-dihydrolipoyl]-L-lysyl-[protein] + succinyl-CoA = N(6)-[(R)-S(8)-succinyldihydrolipoyl]-L-lysyl-[protein] + CoA. Its pathway is carbohydrate metabolism; tricarboxylic acid cycle; succinate from 2-oxoglutarate (transferase route): step 1/2. It functions in the pathway carbohydrate metabolism; tricarboxylic acid cycle; succinyl-CoA from 2-oxoglutarate (dehydrogenase route): step 1/1. With respect to regulation, alpha-ketoglutarate dehydrogenase and decarboxylase activities are inhibited by unphosphorylated GarA, and allosterically activated by acetyl-CoA, the main substrate of the TCA cycle. Functionally, shows three enzymatic activities that share a first common step, the attack of thiamine-PP on 2-oxoglutarate (alpha-ketoglutarate, KG), leading to the formation of an enamine-thiamine-PP intermediate upon decarboxylation. Thus, displays KGD activity, catalyzing the decarboxylation from five-carbon 2-oxoglutarate to four-carbon succinate semialdehyde (SSA). Also catalyzes C-C bond formation between the activated aldehyde formed after decarboxylation of alpha-ketoglutarate and the carbonyl of glyoxylate (GLX), to yield 2-hydroxy-3-oxoadipate (HOA), which spontaneously decarboxylates to form 5-hydroxylevulinate (HLA). And is also a component of the 2-oxoglutarate dehydrogenase (ODH) complex, that catalyzes the overall conversion of 2-oxoglutarate to succinyl-CoA and CO(2). The KG decarboxylase and KG dehydrogenase reactions provide two alternative, tightly regulated, pathways connecting the oxidative and reductive branches of the TCA cycle. In Mycobacterium leprae (strain TN), this protein is Multifunctional 2-oxoglutarate metabolism enzyme (kgd).